Here is a 356-residue protein sequence, read N- to C-terminus: Glucose-1-phosphate thymidylyltransferase (356 aa).

Asp-107 and Asp-221 together coordinate Mg(2+).

It belongs to the glucose-1-phosphate thymidylyltransferase family. Mg(2+) is required as a cofactor.

It catalyses the reaction dTTP + alpha-D-glucose 1-phosphate + H(+) = dTDP-alpha-D-glucose + diphosphate. Its pathway is antibiotic biosynthesis. Functionally, involved in the biosynthesis of the two 2,6-deoxysugars, dTDP-L-oleandrose and dTDP-D-desosamine, attached to the macrolactone ring oleandolide to produce the aglycone antibiotic oleandomycin. Catalyzes the formation of dTDP-glucose from deoxythymidine triphosphate (dTTP) and glucose 1-phosphate. The protein is Glucose-1-phosphate thymidylyltransferase of Streptomyces antibioticus.